Reading from the N-terminus, the 180-residue chain is Type-1 fimbrial protein subunit (180 aa).

The signal sequence occupies residues 1–22; it reads MKKVLLPLAALVLSATASNAMA. Cysteine 38 and cysteine 78 are oxidised to a cystine.

It belongs to the fimbrial protein family.

Its subcellular location is the fimbrium. Functionally, fimbriae (also called pili), polar filaments radiating from the surface of the bacterium to a length of 0.5-1.5 micrometers and numbering 100-300 per cell, enable bacteria to colonize the epithelium of specific host organs. The chain is Type-1 fimbrial protein subunit (fimA) from Serratia marcescens.